Reading from the N-terminus, the 37-residue chain is Cytochrome b6-f complex subunit 5 (37 aa).

The chain crosses the membrane as a helical span at residues 5 to 25 (LLFGIVLGLIPVTLVGLFVAA).

The protein belongs to the PetG family. As to quaternary structure, the 4 large subunits of the cytochrome b6-f complex are cytochrome b6, subunit IV (17 kDa polypeptide, PetD), cytochrome f and the Rieske protein, while the 4 small subunits are PetG, PetL, PetM and PetN. The complex functions as a dimer.

The protein resides in the plastid. It is found in the chloroplast thylakoid membrane. In terms of biological role, component of the cytochrome b6-f complex, which mediates electron transfer between photosystem II (PSII) and photosystem I (PSI), cyclic electron flow around PSI, and state transitions. PetG is required for either the stability or assembly of the cytochrome b6-f complex. This Rhodomonas salina (Cryptomonas salina) protein is Cytochrome b6-f complex subunit 5.